The primary structure comprises 485 residues: ATP synthase subunit beta (485 aa).

Residues 1–20 (MSTTKTTKMTVKTGSKGTSG) are disordered. An ATP-binding site is contributed by 170–177 (GGAGVGKT).

The protein belongs to the ATPase alpha/beta chains family. F-type ATPases have 2 components, CF(1) - the catalytic core - and CF(0) - the membrane proton channel. CF(1) has five subunits: alpha(3), beta(3), gamma(1), delta(1), epsilon(1). CF(0) has three main subunits: a(1), b(2) and c(9-12). The alpha and beta chains form an alternating ring which encloses part of the gamma chain. CF(1) is attached to CF(0) by a central stalk formed by the gamma and epsilon chains, while a peripheral stalk is formed by the delta and b chains.

Its subcellular location is the cell membrane. The catalysed reaction is ATP + H2O + 4 H(+)(in) = ADP + phosphate + 5 H(+)(out). Produces ATP from ADP in the presence of a proton gradient across the membrane. The catalytic sites are hosted primarily by the beta subunits. This is ATP synthase subunit beta from Mycobacterium leprae (strain TN).